A 251-amino-acid chain; its full sequence is Probable transcriptional regulatory protein BLA_1344 (251 aa).

This sequence belongs to the TACO1 family.

It is found in the cytoplasm. The protein is Probable transcriptional regulatory protein BLA_1344 of Bifidobacterium animalis subsp. lactis (strain AD011).